We begin with the raw amino-acid sequence, 581 residues long: Proline--tRNA ligase (581 aa).

This sequence belongs to the class-II aminoacyl-tRNA synthetase family. ProS type 1 subfamily. As to quaternary structure, homodimer.

The protein localises to the cytoplasm. It catalyses the reaction tRNA(Pro) + L-proline + ATP = L-prolyl-tRNA(Pro) + AMP + diphosphate. Catalyzes the attachment of proline to tRNA(Pro) in a two-step reaction: proline is first activated by ATP to form Pro-AMP and then transferred to the acceptor end of tRNA(Pro). As ProRS can inadvertently accommodate and process non-cognate amino acids such as alanine and cysteine, to avoid such errors it has two additional distinct editing activities against alanine. One activity is designated as 'pretransfer' editing and involves the tRNA(Pro)-independent hydrolysis of activated Ala-AMP. The other activity is designated 'posttransfer' editing and involves deacylation of mischarged Ala-tRNA(Pro). The misacylated Cys-tRNA(Pro) is not edited by ProRS. This Chlamydia trachomatis serovar A (strain ATCC VR-571B / DSM 19440 / HAR-13) protein is Proline--tRNA ligase.